The chain runs to 512 residues: Glycerol kinase, glycosomal (512 aa).

Position 11 (Thr-11) interacts with substrate. Residue Arg-15 participates in ATP binding. Substrate is bound by residues Arg-84, Tyr-139, and Asp-254. ATP contacts are provided by residues Thr-276, Gly-321, and 422 to 426 (GLSKN). Positions 510–512 (AKL) match the Microbody targeting signal motif.

This sequence belongs to the FGGY kinase family.

Its subcellular location is the glycosome. It carries out the reaction glycerol + ATP = sn-glycerol 3-phosphate + ADP + H(+). It functions in the pathway polyol metabolism; glycerol degradation via glycerol kinase pathway; sn-glycerol 3-phosphate from glycerol: step 1/1. Functionally, catalyzes the phosphorylation of glycerol using ATP. Under anoxic conditions, when glycerol 3-phosphate accumulates in the glycosome, it catalyzes the reverse reaction, maintaining the ATP balance. Key enzyme for the survival of bloodstream forms under anoxic conditions. The sequence is that of Glycerol kinase, glycosomal (GK) from Trypanosoma brucei brucei.